We begin with the raw amino-acid sequence, 322 residues long: MDTSSINAQSIFDDNAATLKLSWLTGHEGWERGFSADTVANATSSADLVGHLNLIHPNRIQVLGEAEIDYYQRQTDEDRSRHMAELIALEPPFLVVAGGAAAPPELVLRCTRSSTPLFTTPMSAAAVIDSLRLYMSRILAPRATLHGVFLDILGMGVLLTGDSGLGKSELGLELISRGHGLVADDAVDFVRLGPDFVEGRCPPLLQNLLEVRGLGLLDIKTIFGETAVRRKMKLKLIVQLVRRPDGEFQRLPLESQTVDVLGLPISKVTIQVAAGRNLAVLVEAAVRNTILQLRGIDTLRDFMDRQRLAMQDPESQFPGKLV.

Residues His146 and Lys167 contribute to the active site. An ATP-binding site is contributed by 161 to 168 (GDSGLGKS). Residue Ser168 participates in Mg(2+) binding. Asp185 functions as the Proton acceptor; for phosphorylation activity. Proton donor; for dephosphorylation activity in the catalytic mechanism. Residues 209-218 (LEVRGLGLLD) form an important for the catalytic mechanism of both phosphorylation and dephosphorylation region. Mg(2+) is bound at residue Glu210. Arg250 is a catalytic residue. The important for the catalytic mechanism of dephosphorylation stretch occupies residues 271-276 (QVAAGR).

This sequence belongs to the HPrK/P family. As to quaternary structure, homohexamer. It depends on Mg(2+) as a cofactor.

It carries out the reaction [HPr protein]-L-serine + ATP = [HPr protein]-O-phospho-L-serine + ADP + H(+). The enzyme catalyses [HPr protein]-O-phospho-L-serine + phosphate + H(+) = [HPr protein]-L-serine + diphosphate. Its function is as follows. Catalyzes the ATP- as well as the pyrophosphate-dependent phosphorylation of a specific serine residue in HPr, a phosphocarrier protein of the phosphoenolpyruvate-dependent sugar phosphotransferase system (PTS). HprK/P also catalyzes the pyrophosphate-producing, inorganic phosphate-dependent dephosphorylation (phosphorolysis) of seryl-phosphorylated HPr (P-Ser-HPr). This is HPr kinase/phosphorylase from Burkholderia multivorans (strain ATCC 17616 / 249).